The following is a 215-amino-acid chain: LexA repressor (215 aa).

The segment at residues 28 to 48 (RAEIAAELGFSSPNAAEEHLR) is a DNA-binding region (H-T-H motif). Residues Ser133 and Lys170 each act as for autocatalytic cleavage activity in the active site.

It belongs to the peptidase S24 family. As to quaternary structure, homodimer.

It carries out the reaction Hydrolysis of Ala-|-Gly bond in repressor LexA.. Functionally, represses a number of genes involved in the response to DNA damage (SOS response), including recA and lexA. In the presence of single-stranded DNA, RecA interacts with LexA causing an autocatalytic cleavage which disrupts the DNA-binding part of LexA, leading to derepression of the SOS regulon and eventually DNA repair. In Burkholderia cenocepacia (strain HI2424), this protein is LexA repressor.